A 128-amino-acid chain; its full sequence is MMPKEEQVLKNLTMENANEENEKKDEKEQDANKGEPLALSLGAGEYCVPRGNRRRFRVRQPILHYRWDMTQRLGKPQARMREENIERIGEEMRQLMEKLREKQLSHSLRAVSTDPPHHEHNDEFCLMP.

Positions 1-44 are disordered; that stretch reads MMPKEEQVLKNLTMENANEENEKKDEKEQDANKGEPLALSLGAG. Basic and acidic residues predominate over residues 20-33; that stretch reads ENEKKDEKEQDANK. Arg50 carries the post-translational modification Omega-N-methylarginine. A disordered region spans residues 103–128; sequence QLSHSLRAVSTDPPHHEHNDEFCLMP. Residues 115-128 are compositionally biased toward basic and acidic residues; that stretch reads PPHHEHNDEFCLMP. The tract at residues 117–121 is his cluster; it reads HHEHN. Cys125 serves as a coordination point for Zn(2+).

It belongs to the BEX family. Interacts with LMO2, possibly leading to regulate the transcriptional activity of a DNA-binding complex containing LMO2. Interacts with OMP.

The protein localises to the cytoplasm. It is found in the nucleus. Functionally, regulator of mitochondrial apoptosis and G1 cell cycle. Regulates the level of PP2A regulatory subunit B and PP2A phosphatase activity. In absence of reductive stress, acts as a pseudosubstrate for the CRL2(FEM1B) complex: associates with FEM1B via zinc, thereby preventing association between FEM1B and its substrates. The chain is Protein BEX2 (BEX2) from Bos taurus (Bovine).